We begin with the raw amino-acid sequence, 601 residues long: Potassium-transporting ATPase potassium-binding subunit (601 aa).

Transmembrane regions (helical) follow at residues 3 to 23, 62 to 82, 132 to 152, 179 to 199, 283 to 303, 314 to 334, 367 to 387, 397 to 417, 419 to 439, 459 to 479, 523 to 543, and 564 to 584; these read ASAW…AWPL, HYAL…YALQ, LGLS…AFAL, AWVL…QGVI, LTNL…CFAF, VAIL…VTAA, FGIS…CGAV, LGGM…GGAG, GLYG…LMIG, VAIL…VLAP, VLLA…VLAI, and GPLF…LNYV.

This sequence belongs to the KdpA family. The system is composed of three essential subunits: KdpA, KdpB and KdpC.

Its subcellular location is the cell inner membrane. In terms of biological role, part of the high-affinity ATP-driven potassium transport (or Kdp) system, which catalyzes the hydrolysis of ATP coupled with the electrogenic transport of potassium into the cytoplasm. This subunit binds the periplasmic potassium ions and delivers the ions to the membrane domain of KdpB through an intramembrane tunnel. The chain is Potassium-transporting ATPase potassium-binding subunit from Paracidovorax citrulli (strain AAC00-1) (Acidovorax citrulli).